We begin with the raw amino-acid sequence, 180 residues long: Cuticle protein 3 (180 aa).

An N-terminal signal peptide occupies residues 1–16 (MMKLIVLAAFIGVCAG). The region spanning 58 to 121 (EQGFRYAYET…PQGAHFPTPP (64 aa)) is the Chitin-binding type R&amp;R domain.

The protein is Cuticle protein 3 of Lonomia obliqua (Moth).